We begin with the raw amino-acid sequence, 160 residues long: Large ribosomal subunit protein uL15 (160 aa).

Positions 1-14 are enriched in polar residues; the sequence is MKLNDISDNPGSSK. Residues 1-35 are disordered; sequence MKLNDISDNPGSSKSRMRVGRGIGSGKGKTCGRGV. The span at 21 to 35 shows a compositional bias: gly residues; sequence RGIGSGKGKTCGRGV.

It belongs to the universal ribosomal protein uL15 family. As to quaternary structure, part of the 50S ribosomal subunit.

Binds to the 23S rRNA. In Beijerinckia indica subsp. indica (strain ATCC 9039 / DSM 1715 / NCIMB 8712), this protein is Large ribosomal subunit protein uL15.